The following is a 1342-amino-acid chain: DNA-directed RNA polymerase subunit beta (1342 aa).

An N6-acetyllysine mark is found at Lys1022 and Lys1200.

It belongs to the RNA polymerase beta chain family. The RNAP catalytic core consists of 2 alpha, 1 beta, 1 beta' and 1 omega subunit. When a sigma factor is associated with the core the holoenzyme is formed, which can initiate transcription.

It catalyses the reaction RNA(n) + a ribonucleoside 5'-triphosphate = RNA(n+1) + diphosphate. In terms of biological role, DNA-dependent RNA polymerase catalyzes the transcription of DNA into RNA using the four ribonucleoside triphosphates as substrates. The chain is DNA-directed RNA polymerase subunit beta from Escherichia fergusonii (strain ATCC 35469 / DSM 13698 / CCUG 18766 / IAM 14443 / JCM 21226 / LMG 7866 / NBRC 102419 / NCTC 12128 / CDC 0568-73).